The following is a 509-amino-acid chain: Probable cation transporter HKT2;3 (509 aa).

At 1 to 32 (MPIRLHIFVNSARHAINSSAFICRFIAYHLSP) the chain is on the cytoplasmic side. The next 2 helical transmembrane spans lie at 33–53 (LLIHLSYFLIIDILGFVSLVV) and 96–116 (ILTLLMFLDSKMFLSFLGLVL). At 117 to 164 (ESSKQNKHDPENRRVSSVTVCKQSQLEEATPQTPSMNSIDIKKRCLKY) the chain is on the cytoplasmic side. 2 consecutive transmembrane segments (helical) span residues 165–185 (LVFVVLAYMIIILVTGSLLVF) and 237–257 (GLLLLLIGQILAGSTLFPVFL). The Cytoplasmic segment spans residues 258–296 (RLVIWALRGLRLAKAEEPDFMMNNSSAVGFSHLLPNLQT). The next 2 membrane-spanning stretches (helical) occupy residues 297–317 (IFLAVVEVAFVAMTVILFCCL) and 353–373 (CSLVAPAALVLFMVMMYTPSL). The Cytoplasmic portion of the chain corresponds to 374 to 400 (TKLFSACQDHKRIGPESDDRTSKGKPF). The next 2 helical transmembrane spans lie at 401–421 (LKMMAFSPLGFNTTVIMLVCI) and 474–494 (AYNFSGWWSEPGKLILVLAML). The Cytoplasmic portion of the chain corresponds to 495–509 (CGRLNSKDSTSARTR).

This sequence belongs to the TrkH potassium transport family. HKT (TC 2.A.38.3) subfamily.

The protein localises to the membrane. Functionally, probable cation transporter. May be involved in regulation of potassium-sodium homeostasis. The protein is Probable cation transporter HKT2;3 of Oryza sativa subsp. japonica (Rice).